Consider the following 255-residue polypeptide: UDP-2,3-diacylglucosamine hydrolase (255 aa).

The Mn(2+) site is built by aspartate 8, histidine 10, aspartate 41, asparagine 79, and histidine 114. Substrate is bound at residue 79 to 80; it reads NR. Positions 122, 160, 164, 167, and 195 each coordinate substrate. Positions 195 and 197 each coordinate Mn(2+).

Belongs to the LpxH family. Mn(2+) serves as cofactor.

It localises to the cell inner membrane. The catalysed reaction is UDP-2-N,3-O-bis[(3R)-3-hydroxytetradecanoyl]-alpha-D-glucosamine + H2O = 2-N,3-O-bis[(3R)-3-hydroxytetradecanoyl]-alpha-D-glucosaminyl 1-phosphate + UMP + 2 H(+). Its pathway is glycolipid biosynthesis; lipid IV(A) biosynthesis; lipid IV(A) from (3R)-3-hydroxytetradecanoyl-[acyl-carrier-protein] and UDP-N-acetyl-alpha-D-glucosamine: step 4/6. Its function is as follows. Hydrolyzes the pyrophosphate bond of UDP-2,3-diacylglucosamine to yield 2,3-diacylglucosamine 1-phosphate (lipid X) and UMP by catalyzing the attack of water at the alpha-P atom. Involved in the biosynthesis of lipid A, a phosphorylated glycolipid that anchors the lipopolysaccharide to the outer membrane of the cell. The polypeptide is UDP-2,3-diacylglucosamine hydrolase (Hamiltonella defensa subsp. Acyrthosiphon pisum (strain 5AT)).